The following is a 368-amino-acid chain: Phospho-N-acetylmuramoyl-pentapeptide-transferase (368 aa).

10 helical membrane-spanning segments follow: residues 31–51 (LTSM…LYGL), 73–93 (TMGG…WGNL), 98–118 (VILL…DDYM), 134–154 (FILS…YTGT), 175–195 (GPVI…IIGS), 213–233 (VLIS…PIVA), 249–269 (VFLS…AHPA), 271–291 (VFMG…IVIL), 296–316 (ILLL…ILQV), and 345–365 (KIVI…LSTL).

The protein belongs to the glycosyltransferase 4 family. MraY subfamily. Mg(2+) serves as cofactor.

The protein localises to the cell inner membrane. The catalysed reaction is UDP-N-acetyl-alpha-D-muramoyl-L-alanyl-gamma-D-glutamyl-meso-2,6-diaminopimeloyl-D-alanyl-D-alanine + di-trans,octa-cis-undecaprenyl phosphate = di-trans,octa-cis-undecaprenyl diphospho-N-acetyl-alpha-D-muramoyl-L-alanyl-D-glutamyl-meso-2,6-diaminopimeloyl-D-alanyl-D-alanine + UMP. Its pathway is cell wall biogenesis; peptidoglycan biosynthesis. Catalyzes the initial step of the lipid cycle reactions in the biosynthesis of the cell wall peptidoglycan: transfers peptidoglycan precursor phospho-MurNAc-pentapeptide from UDP-MurNAc-pentapeptide onto the lipid carrier undecaprenyl phosphate, yielding undecaprenyl-pyrophosphoryl-MurNAc-pentapeptide, known as lipid I. The polypeptide is Phospho-N-acetylmuramoyl-pentapeptide-transferase (Leptospira interrogans serogroup Icterohaemorrhagiae serovar copenhageni (strain Fiocruz L1-130)).